The primary structure comprises 320 residues: Cytochrome f (320 aa).

Residues 1–35 form the signal peptide; the sequence is MQTRNTFSSIKEEITRSISVSLMIYIITWAPVSNA. 4 residues coordinate heme: Tyr36, Cys56, Cys59, and His60. A helical membrane pass occupies residues 286 to 306; the sequence is VQGLLFFFASVILAQIFLVLK.

Belongs to the cytochrome f family. As to quaternary structure, the 4 large subunits of the cytochrome b6-f complex are cytochrome b6, subunit IV (17 kDa polypeptide, petD), cytochrome f and the Rieske protein, while the 4 small subunits are PetG, PetL, PetM and PetN. The complex functions as a dimer. It depends on heme as a cofactor.

It is found in the plastid. It localises to the chloroplast thylakoid membrane. In terms of biological role, component of the cytochrome b6-f complex, which mediates electron transfer between photosystem II (PSII) and photosystem I (PSI), cyclic electron flow around PSI, and state transitions. This chain is Cytochrome f, found in Cucumis sativus (Cucumber).